The primary structure comprises 518 residues: Serine/threonine-protein kinase UL13 (518 aa).

Disordered stretches follow at residues 1–22 and 39–120; these read MDESGRQRPASHVAADISPQGA and SRRA…PSPP. Residues 44–61 are compositionally biased toward low complexity; it reads GRPSGPSPRDGAVSGARP. Positions 151–518 constitute a Protein kinase domain; it reads PGARSFGGSG…ANPAARHSLS (368 aa). Residues 157-165 and lysine 176 contribute to the ATP site; that span reads GGSGGYGEV. Aspartate 277 (proton acceptor) is an active-site residue.

This sequence belongs to the protein kinase superfamily. Ser/Thr protein kinase family. Post-translationally, autophosphorylated.

The protein localises to the virion tegument. It is found in the host nucleus. The catalysed reaction is L-seryl-[protein] + ATP = O-phospho-L-seryl-[protein] + ADP + H(+). It catalyses the reaction L-threonyl-[protein] + ATP = O-phospho-L-threonyl-[protein] + ADP + H(+). Its function is as follows. Multifunctional serine/threonine kinase that plays a role in several processes including egress of virus particles from the nucleus, modulation of the actin cytoskeleton and regulation of viral and cellular gene expression. Regulates the nuclear localization of viral envelopment factors UL34 and UL31, by phosphorylating the US3 kinase, indicating a role in nuclear egress. Disrupts host nuclear lamins, including LMNA and LMNB1. Phosphorylates the viral Fc receptor composed of glycoproteins E (gE) and I (gI). Phosphorylation of glycoprotein E (gE) by UL13 alters its subcellular localization, from the host early endosome to the plasma membrane. Participates in the transcriptional regulation of cellular and viral mRNAs mainly by phosphorylating the viral transcriptional regulator ICP22. Additional substrates have been identified, including UL41, UL49 or host EF1D. The polypeptide is Serine/threonine-protein kinase UL13 (Homo sapiens (Human)).